Reading from the N-terminus, the 120-residue chain is Ribosome-binding factor A (120 aa).

Belongs to the RbfA family. In terms of assembly, monomer. Binds 30S ribosomal subunits, but not 50S ribosomal subunits or 70S ribosomes.

Its subcellular location is the cytoplasm. Functionally, one of several proteins that assist in the late maturation steps of the functional core of the 30S ribosomal subunit. Associates with free 30S ribosomal subunits (but not with 30S subunits that are part of 70S ribosomes or polysomes). Required for efficient processing of 16S rRNA. May interact with the 5'-terminal helix region of 16S rRNA. This is Ribosome-binding factor A from Chlamydia caviae (strain ATCC VR-813 / DSM 19441 / 03DC25 / GPIC) (Chlamydophila caviae).